The chain runs to 409 residues: Elongation factor Tu (409 aa).

A tr-type G domain is found at Lys-10–Glu-214. The tract at residues Gly-19–Thr-26 is G1. Residue Gly-19–Thr-26 participates in GTP binding. Position 26 (Thr-26) interacts with Mg(2+). The G2 stretch occupies residues Gly-60 to Asn-64. Residues Asp-81 to Gly-84 are G3. GTP is bound by residues Asp-81–His-85 and Asn-136–Asp-139. A G4 region spans residues Asn-136–Asp-139. Positions Ser-174 to Lys-176 are G5.

This sequence belongs to the TRAFAC class translation factor GTPase superfamily. Classic translation factor GTPase family. EF-Tu/EF-1A subfamily. Monomer.

The protein resides in the cytoplasm. It catalyses the reaction GTP + H2O = GDP + phosphate + H(+). Functionally, GTP hydrolase that promotes the GTP-dependent binding of aminoacyl-tRNA to the A-site of ribosomes during protein biosynthesis. In Microcystis aeruginosa (strain NIES-843 / IAM M-2473), this protein is Elongation factor Tu.